A 371-amino-acid polypeptide reads, in one-letter code: Protein RecA (371 aa).

Residue 75–82 coordinates ATP; that stretch reads GPESSGKT. The interval 343-371 is disordered; the sequence is KAKDEPIADEDQPIDVVPNFDDQDVEPQN.

This sequence belongs to the RecA family.

Its subcellular location is the cytoplasm. Its function is as follows. Can catalyze the hydrolysis of ATP in the presence of single-stranded DNA, the ATP-dependent uptake of single-stranded DNA by duplex DNA, and the ATP-dependent hybridization of homologous single-stranded DNAs. It interacts with LexA causing its activation and leading to its autocatalytic cleavage. In Corynebacterium urealyticum (strain ATCC 43042 / DSM 7109), this protein is Protein RecA.